The primary structure comprises 1025 residues: Protein mono-ADP-ribosyltransferase PARP10 (1025 aa).

The residue at position 101 (threonine 101) is a Phosphothreonine. Glutamate 106 carries the ADP-ribosyl glutamic acid modification. The residue at position 140 (lysine 140) is an N6-(ADP-ribosyl)lysine. A disordered region spans residues 318–346 (GIMTTGSGQEPGQSGTSLRTGPMGSLGQA). Positions 321–336 (TTGSGQEPGQSGTSLR) are enriched in polar residues. Phosphoserine occurs at positions 378, 423, and 431. Disordered stretches follow at residues 569 to 589 (VLPG…DQED) and 617 to 644 (LEEE…APST). Residues 617–639 (LEEEGPQEQPEEEVTPGHEEEEP) are compositionally biased toward acidic residues. Short sequence motifs (ubiquitin-interacting) lie at residues 650–667 (LEEE…LEPQ) and 673–690 (QEEA…LLEQ). Serine 663 bears the Phosphoserine mark. A myc binding region spans residues 700 to 907 (DGGTDGKAQL…CAHGFNRSFC (208 aa)). Residues 806 to 1025 (PTLAGQTLKG…SGLPGRSPDT (220 aa)) form the PARP catalytic domain. Residues 831–838 (QEVVRAFY) carry the PIP-box motif. An ADP-ribosyl glutamic acid modification is found at glutamate 882. Residue lysine 916 is modified to N6-(ADP-ribosyl)lysine. Position 916 is an N6-acetyllysine (lysine 916). Residues 1006-1025 (HVPRASPDDPSGLPGRSPDT) form a disordered region. Phosphoserine is present on serine 1011.

The protein belongs to the ARTD/PARP family. In terms of assembly, interacts with MYC. Interacts with PARP14. Interacts (via-PIP box and ubiquitin-interacting motifs) with PCNA. Post-translationally, stimulated through its phosphorylation by CDK2. Acquires CDK-dependent phosphorylation through late-G1 to S phase, and from prometaphase to cytokinesis in the nucleolar organizing regions. Phosphorylation is suppressed in growth-arrested cells. In terms of processing, auto-mono-ADP-ribosylated on glutamate and lysine residues. In terms of tissue distribution, highly expressed in spleen and thymus. Intermediate levels in liver, kidney, pancreas, prostate, testis, ovary, intestine, and leukocytes. Low expression in heart, brain, placenta, lung, skeletal muscle, and colon.

Its subcellular location is the nucleus. The protein resides in the nucleolus. It localises to the cytoplasm. It carries out the reaction L-lysyl-[protein] + NAD(+) = N(6)-(ADP-D-ribosyl)-L-lysyl-[protein] + nicotinamide + H(+). The catalysed reaction is L-aspartyl-[protein] + NAD(+) = 4-O-(ADP-D-ribosyl)-L-aspartyl-[protein] + nicotinamide. It catalyses the reaction L-glutamyl-[protein] + NAD(+) = 5-O-(ADP-D-ribosyl)-L-glutamyl-[protein] + nicotinamide. In terms of biological role, ADP-ribosyltransferase that mediates mono-ADP-ribosylation of glutamate and aspartate residues on target proteins. In contrast to PARP1 and PARP2, it is not able to mediate poly-ADP-ribosylation. Catalyzes mono-ADP-ribosylation of GSK3B, leading to negatively regulate GSK3B kinase activity. Involved in translesion DNA synthesis in response to DNA damage via its interaction with PCNA. The sequence is that of Protein mono-ADP-ribosyltransferase PARP10 from Homo sapiens (Human).